The sequence spans 156 residues: B3 domain-containing protein At5g26805 (156 aa).

The TF-B3 DNA-binding region spans 57 to 155 (KFQLPMEKIR…MFCFSVLDGR (99 aa)).

The protein localises to the nucleus. This Arabidopsis thaliana (Mouse-ear cress) protein is B3 domain-containing protein At5g26805.